The primary structure comprises 197 residues: Small ribosomal subunit protein uS10c (197 aa).

Residues 1–60 constitute a chloroplast transit peptide; sequence MATSSLSTIVFSPLALSNSSSFPNKPQVSNLSLHSSLSNLRRTLSHSSPSSSSSSNVRVF. Residues 67–91 are disordered; it reads ESQETGPESYVEEGSETSALGIGAD.

This sequence belongs to the universal ribosomal protein uS10 family. In terms of assembly, part of the 30S ribosomal subunit.

The protein localises to the plastid. It localises to the chloroplast. The polypeptide is Small ribosomal subunit protein uS10c (RPS10) (Mesembryanthemum crystallinum (Common ice plant)).